A 176-amino-acid chain; its full sequence is Mitochondrial inner membrane protein Mpv17 (176 aa).

Helical transmembrane passes span 18 to 38 (VQVL…QQLV), 53 to 73 (TMVS…YKVL), 94 to 114 (GGFA…LNGM), and 131 to 151 (LITN…LVPL).

It belongs to the peroxisomal membrane protein PXMP2/4 family. High levels in heart, kidney, and brain, intermediate levels in testis, and low levels in liver and spleen.

Its subcellular location is the mitochondrion inner membrane. Non-selective channel that modulates the membrane potential under normal conditions and oxidative stress, and is involved in mitochondrial homeostasis. Involved in mitochondrial deoxynucleoside triphosphates (dNTP) pool homeostasis and mitochondrial DNA (mtDNA) maintenance. May be involved in the regulation of reactive oxygen species metabolism and the control of oxidative phosphorylation. The polypeptide is Mitochondrial inner membrane protein Mpv17 (Mus musculus (Mouse)).